Reading from the N-terminus, the 454-residue chain is Aspartokinase 3 (454 aa).

ACT domains are found at residues 312–388 (ISKY…ALIM) and 389–454 (VVGE…VLIS).

Belongs to the aspartokinase family. In terms of assembly, monomer.

The catalysed reaction is L-aspartate + ATP = 4-phospho-L-aspartate + ADP. The protein operates within amino-acid biosynthesis; L-lysine biosynthesis via DAP pathway; (S)-tetrahydrodipicolinate from L-aspartate: step 1/4. Its pathway is amino-acid biosynthesis; L-methionine biosynthesis via de novo pathway; L-homoserine from L-aspartate: step 1/3. It functions in the pathway amino-acid biosynthesis; L-threonine biosynthesis; L-threonine from L-aspartate: step 1/5. Functionally, catalyzes the phosphorylation of the beta-carboxyl group of aspartic acid with ATP to yield 4-phospho-L-aspartate, which is involved in the branched biosynthetic pathway leading to the biosynthesis of amino acids threonine, isoleucine and methionine. This chain is Aspartokinase 3 (yclM), found in Bacillus subtilis (strain 168).